Reading from the N-terminus, the 206-residue chain is Thymidylate kinase (206 aa).

7–14 provides a ligand contact to ATP; the sequence is GGEGSGKS.

Belongs to the thymidylate kinase family.

The enzyme catalyses dTMP + ATP = dTDP + ADP. Phosphorylation of dTMP to form dTDP in both de novo and salvage pathways of dTTP synthesis. This Chlamydia pneumoniae (Chlamydophila pneumoniae) protein is Thymidylate kinase (tmk).